Reading from the N-terminus, the 1401-residue chain is Uveal autoantigen with coiled-coil domains and ankyrin repeats protein (1401 aa).

ANK repeat units follow at residues 25–53 (LMRA…KLDV), 54–83 (EGRS…DITT), 87–116 (AGRN…PTEH), 120–149 (QGRT…SVNA), 153–182 (DGRT…DINS), and 186–215 (QNRT…DVTL). Ser-265 carries the phosphoserine modification. 3 coiled-coil regions span residues 273–361 (TKSN…SRFK), 423–827 (ENEI…EKIY), and 856–1368 (ALSS…VIAI). Lys-1020 participates in a covalent cross-link: Glycyl lysine isopeptide (Lys-Gly) (interchain with G-Cter in SUMO2).

As to quaternary structure, component of the apoptosome complex, composed of APAF1, pro-caspase-9 and UACA. In the complex, it probably interacts directly with APAF1. Interacts with LGALS3. Interacts with ARF6 and ACTB. Interacts with RAB39A. In terms of tissue distribution, highly expressed in muscle and heart, moderately in liver, kidney and pancreas, and weakly in placenta and lung.

It localises to the nucleus. The protein localises to the cytoplasm. Its subcellular location is the cytoskeleton. Regulates APAF1 expression and plays an important role in the regulation of stress-induced apoptosis. Promotes apoptosis by regulating three pathways, apoptosome up-regulation, LGALS3/galectin-3 down-regulation and NF-kappa-B inactivation. Regulates the redistribution of APAF1 into the nucleus after proapoptotic stress. Down-regulates the expression of LGALS3 by inhibiting NFKB1. Its function is as follows. Modulates isoactin dynamics to regulate the morphological alterations required for cell growth and motility. Interaction with ARF6 may modulate cell shape and motility after injury. May be involved in multiple neurite formation. This Bos taurus (Bovine) protein is Uveal autoantigen with coiled-coil domains and ankyrin repeats protein (UACA).